The following is a 496-amino-acid chain: 7,8-epoxymelianol synthase CYP88A154 (496 aa).

Residues 11–31 (FNFLWLILAIFVGTYVVLFGF) form a helical membrane-spanning segment. Cys-444 is a binding site for heme.

Belongs to the cytochrome P450 family. Heme serves as cofactor.

The protein resides in the membrane. It carries out the reaction melianol + reduced [NADPH--hemoprotein reductase] + O2 = 7,8-epoxymelianol + oxidized [NADPH--hemoprotein reductase] + H2O + H(+). It participates in secondary metabolite biosynthesis; terpenoid biosynthesis. Monooxygenase involved in the biosynthesis of glabretanes, limonoids and quassinoids triterpene natural products such as ailanthone, chaparrinone, glaucarubinone and amarolide, allelopathic degraded triterpene lactones inhibiting the growth of other plants, and possessing antimalarial, antifeedant, insecticidal, anti-inflammatory and anticancer activities. Catalyzes the epoxidation of melianol to produce 7,8-epoxymelianol. This chain is 7,8-epoxymelianol synthase CYP88A154, found in Ailanthus altissima (Tree-of-heaven).